Reading from the N-terminus, the 290-residue chain is N-acetylmannosamine kinase (290 aa).

ATP is bound by residues 6–13 (ALDIGGTK) and 132–139 (GVGGGIIL). Residues His156, Cys166, Cys168, and Cys173 each contribute to the Zn(2+) site.

Belongs to the ROK (NagC/XylR) family. NanK subfamily. As to quaternary structure, homodimer.

It catalyses the reaction an N-acyl-D-mannosamine + ATP = an N-acyl-D-mannosamine 6-phosphate + ADP + H(+). Its pathway is amino-sugar metabolism; N-acetylneuraminate degradation; D-fructose 6-phosphate from N-acetylneuraminate: step 2/5. In terms of biological role, catalyzes the phosphorylation of N-acetylmannosamine (ManNAc) to ManNAc-6-P. The polypeptide is N-acetylmannosamine kinase (Yersinia pestis (strain Pestoides F)).